Consider the following 784-residue polypeptide: DNA repair and recombination protein RAD54-like (784 aa).

The tract at residues 2-9 (RRSLAPSQ) is required for chromatin remodeling, strand pairing activities and coupling of ATPase activity. Thr-22 is subject to Phosphothreonine. Residues 169–344 (EGKKGNFNGC…FSLVNFVNPE (176 aa)) enclose the Helicase ATP-binding domain. 182 to 189 (DEMGLGKT) lines the ATP pocket. Positions 295 to 298 (DEGH) match the DEGH box motif. Residues 501-658 (LLDFMLATIR…NNESAEKHFT (158 aa)) form the Helicase C-terminal domain. Positions 742 to 784 (QAIKESEETKQEAEDTSIPAKSKRKRSTTPESDDCNDEDFKGF) are disordered. The segment covering 745 to 754 (KESEETKQEA) has biased composition (basic and acidic residues).

It belongs to the SNF2/RAD54 helicase family. Interacts (via N-terminus) with spn-A/Rad51.

It localises to the nucleus. Its function is as follows. Involved in mitotic DNA repair and meiotic recombination. Functions in the recombinational DNA repair pathway. Essential for interhomolog gene conversion (GC), but may have a less important role in intersister GC than spn-A/Rad51. In the presence of DNA, spn-A/Rad51 enhances the ATPase activity of okr/Rad54. This Drosophila willistoni (Fruit fly) protein is DNA repair and recombination protein RAD54-like.